The chain runs to 179 residues: Large ribosomal subunit protein uL5 (179 aa).

The protein belongs to the universal ribosomal protein uL5 family. As to quaternary structure, part of the 50S ribosomal subunit; part of the 5S rRNA/L5/L18/L25 subcomplex. Contacts the 5S rRNA and the P site tRNA. Forms a bridge to the 30S subunit in the 70S ribosome.

In terms of biological role, this is one of the proteins that bind and probably mediate the attachment of the 5S RNA into the large ribosomal subunit, where it forms part of the central protuberance. In the 70S ribosome it contacts protein S13 of the 30S subunit (bridge B1b), connecting the 2 subunits; this bridge is implicated in subunit movement. Contacts the P site tRNA; the 5S rRNA and some of its associated proteins might help stabilize positioning of ribosome-bound tRNAs. This is Large ribosomal subunit protein uL5 from Desulfovibrio desulfuricans (strain ATCC 27774 / DSM 6949 / MB).